The sequence spans 180 residues: Ribosome rescue factor SmrB (180 aa).

A Smr domain is found at 98–173; the sequence is LDLHGLTQLI…GDAALLLLVE (76 aa).

It belongs to the SmrB family. Associates with collided ribosomes, but not with correctly translating polysomes.

Its function is as follows. Acts as a ribosome collision sensor. Detects stalled/collided disomes (pairs of ribosomes where the leading ribosome is stalled and a second ribosome has collided with it) and endonucleolytically cleaves mRNA at the 5' boundary of the stalled ribosome. Stalled/collided disomes form a new interface (primarily via the 30S subunits) that binds SmrB. Cleaved mRNA becomes available for tmRNA ligation, leading to ribosomal subunit dissociation and rescue of stalled ribosomes. This Proteus mirabilis (strain HI4320) protein is Ribosome rescue factor SmrB.